The primary structure comprises 396 residues: 1-deoxy-D-xylulose 5-phosphate reductoisomerase (396 aa).

NADPH-binding residues include Thr-17, Gly-18, Ser-19, Ile-20, Asn-47, and Asn-130. Position 131 (Lys-131) interacts with 1-deoxy-D-xylulose 5-phosphate. Residue Glu-132 coordinates NADPH. Asp-156 is a Mn(2+) binding site. The 1-deoxy-D-xylulose 5-phosphate site is built by Ser-157, Glu-158, Ser-182, and His-205. Residue Glu-158 coordinates Mn(2+). Gly-211 is an NADPH binding site. 1-deoxy-D-xylulose 5-phosphate-binding residues include Ser-218, Asn-223, Lys-224, and Glu-227. Position 227 (Glu-227) interacts with Mn(2+).

Belongs to the DXR family. It depends on Mg(2+) as a cofactor. Requires Mn(2+) as cofactor.

It catalyses the reaction 2-C-methyl-D-erythritol 4-phosphate + NADP(+) = 1-deoxy-D-xylulose 5-phosphate + NADPH + H(+). The protein operates within isoprenoid biosynthesis; isopentenyl diphosphate biosynthesis via DXP pathway; isopentenyl diphosphate from 1-deoxy-D-xylulose 5-phosphate: step 1/6. Catalyzes the NADPH-dependent rearrangement and reduction of 1-deoxy-D-xylulose-5-phosphate (DXP) to 2-C-methyl-D-erythritol 4-phosphate (MEP). The protein is 1-deoxy-D-xylulose 5-phosphate reductoisomerase of Rhizobium etli (strain ATCC 51251 / DSM 11541 / JCM 21823 / NBRC 15573 / CFN 42).